A 476-amino-acid chain; its full sequence is Protein transport protein Sec61 subunit alpha (476 aa).

The Cytoplasmic portion of the chain corresponds to 2-33 (GIKFLEVIKPFCAVLPEIQKPERKIQFREKVL). A helical membrane pass occupies residues 34 to 53 (WTAITLFIFLVCCQIPLFGI). The Lumenal portion of the chain corresponds to 54–76 (MSSDSADPFYWMRVILASNRGTL). A helical membrane pass occupies residues 77-96 (MELGISPIVTSGLIMQLLAG). At 97 to 117 (AKIIEVGDTPKDRALFNGAQK) the chain is on the cytoplasmic side. The helical transmembrane segment at 118 to 138 (LFGMIITIGQAIVYVMTGMYG) threads the bilayer. The Lumenal segment spans residues 139–144 (DPSEMG). Residues 145–165 (AGICLVIIIQLFVAGLIVLLL) traverse the membrane as a helical segment. Residues 166–172 (DELLQKG) are Cytoplasmic-facing. The chain crosses the membrane as a helical span at residues 173–193 (YGLGSGISLFIATNICETIVW). The Lumenal segment spans residues 194-240 (KAFSPTTVNTGRGTEFEGAIIALFHLLATRTDKVRALREAFYRQNLP). A helical transmembrane segment spans residues 241–261 (NLMNLIATVFVFAVVIYFQGF). At 262 to 288 (RVDLPIKSARYRGQYNTYPIKLFYTSN) the chain is on the cytoplasmic side. The chain crosses the membrane as a helical span at residues 289–309 (IPIILQSALVSNLYVISQMLS). Over 310 to 354 (TRFSGNFLVNLLGTWSDTSTGGPARAYPVGGLCYYFSPPESFGSV) the chain is Lumenal. The helical transmembrane segment at 355 to 375 (LDDPVHASIYIVFMLGSCAFF) threads the bilayer. Residues 376-420 (SKTWIEVSGSSAKDVAKQLKEQQMVMRGHRETSMVHELNRYIPTA) are Cytoplasmic-facing. The chain crosses the membrane as a helical span at residues 421 to 441 (AAFGGLCIGGLSVMADFLGAI). At 442–445 (GSGT) the chain is on the lumenal side. The helical transmembrane segment at 446–462 (GILLAVTIIYQYFEIFV) threads the bilayer. Residues 463–476 (KEQSEMGSMGALLF) are Cytoplasmic-facing.

The protein belongs to the SecY/SEC61-alpha family. In terms of assembly, the SEC61 channel-forming translocon complex consists of channel-forming core components SEC61A1, SEC61B and SEC61G and different auxiliary components such as SEC62 and SEC63. The SEC61 channel associates with the multi-pass translocon (MPT) complex.

The protein localises to the endoplasmic reticulum membrane. In terms of biological role, component of SEC61 channel-forming translocon complex that mediates transport of signal peptide-containing precursor polypeptides across the endoplasmic reticulum (ER). Forms a ribosome receptor and a gated pore in the ER membrane, both functions required for cotranslational translocation of nascent polypeptides. May cooperate with auxiliary protein SEC62, SEC63 and HSPA5/BiP to enable post-translational transport of small presecretory proteins. The SEC61 channel is also involved in ER membrane insertion of transmembrane proteins: it mediates membrane insertion of the first few transmembrane segments of proteins, while insertion of subsequent transmembrane regions of multi-pass membrane proteins is mediated by the multi-pass translocon (MPT) complex. The chain is Protein transport protein Sec61 subunit alpha (sec61a) from Gadus ogac (Greenland cod).